We begin with the raw amino-acid sequence, 429 residues long: Probable M18 family aminopeptidase 2 (429 aa).

Zn(2+) is bound by residues H82, H156, and H401.

The protein belongs to the peptidase M18 family. Zn(2+) is required as a cofactor.

The polypeptide is Probable M18 family aminopeptidase 2 (Pseudomonas entomophila (strain L48)).